Reading from the N-terminus, the 90-residue chain is UPF0297 protein BH1268 (90 aa).

Belongs to the UPF0297 family.

This Halalkalibacterium halodurans (strain ATCC BAA-125 / DSM 18197 / FERM 7344 / JCM 9153 / C-125) (Bacillus halodurans) protein is UPF0297 protein BH1268.